Consider the following 348-residue polypeptide: Fructose-1,6-bisphosphatase (348 aa).

Residues 2-5 (PTLV) carry the Pro/N-degron motif. Residue Ser-12 is modified to Phosphoserine. Residues 27–31 (IIEHQ) and 38–42 (TGDFT) contribute to the AMP site. Residues Asp-79 and Glu-108 each contribute to the Mg(2+) site. 122–123 (SY) contacts AMP. Asp-128, Ile-130, and Asp-131 together coordinate Mg(2+). Residue 131 to 134 (DGSS) participates in substrate binding. AMP is bound at residue Arg-150. Residues 222–225 (NEGN), 255–260 (RYVGSM), Tyr-276, and 286–288 (KLR) each bind substrate. Glu-292 provides a ligand contact to Mg(2+).

This sequence belongs to the FBPase class 1 family. Homotetramer. It depends on Mg(2+) as a cofactor. Post-translationally, ubiquitinated. Targeted for proteasomal degradation when cells are shifted to glucose-containing growth medium.

It carries out the reaction beta-D-fructose 1,6-bisphosphate + H2O = beta-D-fructose 6-phosphate + phosphate. It functions in the pathway carbohydrate biosynthesis; gluconeogenesis. Subject to complex allosteric regulation. The enzyme can assume an active R-state, or an inactive T-state. Intermediate conformations may exist. AMP acts as allosteric inhibitor. AMP binding affects the turnover of bound substrate and not the affinity for substrate. The protein is Fructose-1,6-bisphosphatase (FBP1) of Saccharomyces cerevisiae (strain ATCC 204508 / S288c) (Baker's yeast).